Here is a 238-residue protein sequence, read N- to C-terminus: Beta-glucanase (238 aa).

The signal sequence occupies residues 1 to 26 (MMKKKSWFTLMITGVISLFFSVSAFA). One can recognise a GH16 domain in the interval 29-238 (VFWEPLSYFN…EYDWVKYTSN (210 aa)). A disulfide bond links Cys-56 and Cys-85. The active-site Nucleophile is Glu-129. Glu-133 acts as the Proton donor in catalysis.

Belongs to the glycosyl hydrolase 16 family.

The catalysed reaction is Hydrolysis of (1-&gt;4)-beta-D-glucosidic linkages in beta-D-glucans containing (1-&gt;3)- and (1-&gt;4)-bonds.. This is Beta-glucanase (gluB) from Paenibacillus polymyxa (Bacillus polymyxa).